The sequence spans 218 residues: Large ribosomal subunit protein uL3 (218 aa).

Q154 is modified (N5-methylglutamine).

This sequence belongs to the universal ribosomal protein uL3 family. As to quaternary structure, part of the 50S ribosomal subunit. Forms a cluster with proteins L14 and L19. In terms of processing, methylated by PrmB.

Functionally, one of the primary rRNA binding proteins, it binds directly near the 3'-end of the 23S rRNA, where it nucleates assembly of the 50S subunit. This is Large ribosomal subunit protein uL3 from Polynucleobacter asymbioticus (strain DSM 18221 / CIP 109841 / QLW-P1DMWA-1) (Polynucleobacter necessarius subsp. asymbioticus).